Reading from the N-terminus, the 111-residue chain is PCNA-associated factor (111 aa).

Residue Ser8 is modified to Phosphoserine. Residue Lys15 forms a Glycyl lysine isopeptide (Lys-Gly) (interchain with G-Cter in ubiquitin) linkage. Residues 23–34 (RKVLGSSTSATN) carry the D-box motif. A disordered region spans residues 23–111 (RKVLGSSTSA…QPDHTNDEKE (89 aa)). An N6-acetyllysine; alternate modification is found at Lys24. A Glycyl lysine isopeptide (Lys-Gly) (interchain with G-Cter in ubiquitin); alternate cross-link involves residue Lys24. Phosphoserine is present on residues Ser28, Ser31, and Ser72. The span at 28–40 (SSTSATNSTSVSS) shows a compositional bias: low complexity. The short motif at 62 to 72 (QKGIGEFFRLS) is the PIP-box element. The segment covering 72–81 (SPKDSEKENQ) has biased composition (basic and acidic residues). Residues 78-80 (KEN) carry the KEN box motif. The Initiation motif signature appears at 85–97 (EAGSSGLGKAKRK).

In terms of assembly, interacts (when monoubiquitinated at Lys-15 and Lys-24) with PCNA. Interacts with isoform 2/p33ING1b of ING1. Interacts with BRCA1. Monoubiquitinated at Lys-15 and Lys-24 during normal S phase, promoting its association with PCNA. Also diubiquitinated at these 2 sites. Following DNA damage, monoubiquitin chains at Lys-15 and Lys-24 are probably extended, leading to disrupt the interaction with PCNA. Polyubiquitinated by the APC/C complex at the mitotic exit, leading to its degradation by the proteasome. In terms of tissue distribution, expressed predominantly in liver, pancreas and placenta. Not detected in heart or brain. Highly expressed in a number of tumors, especially esophageal tumors, in anaplastic thyroid carcinomas, adrenocortical carcinomas, and in non-small-cell lung cancer lines.

It localises to the nucleus. Its subcellular location is the cytoplasm. The protein localises to the perinuclear region. In terms of biological role, PCNA-binding protein that acts as a regulator of DNA repair during DNA replication. Following DNA damage, the interaction with PCNA is disrupted, facilitating the interaction between monoubiquitinated PCNA and the translesion DNA synthesis DNA polymerase eta (POLH) at stalled replisomes, facilitating the bypass of replication-fork-blocking lesions. Also acts as a regulator of centrosome number. This Homo sapiens (Human) protein is PCNA-associated factor.